Consider the following 617-residue polypeptide: Elongation factor 4 (617 aa).

Residues 17–198 enclose the tr-type G domain; the sequence is AIIRNFCIIA…KIVRDLPAPV (182 aa). Residues 29–34 and 145–148 contribute to the GTP site; these read DHGKST and NKID.

The protein belongs to the TRAFAC class translation factor GTPase superfamily. Classic translation factor GTPase family. LepA subfamily.

Its subcellular location is the cell membrane. It catalyses the reaction GTP + H2O = GDP + phosphate + H(+). Required for accurate and efficient protein synthesis under certain stress conditions. May act as a fidelity factor of the translation reaction, by catalyzing a one-codon backward translocation of tRNAs on improperly translocated ribosomes. Back-translocation proceeds from a post-translocation (POST) complex to a pre-translocation (PRE) complex, thus giving elongation factor G a second chance to translocate the tRNAs correctly. Binds to ribosomes in a GTP-dependent manner. This is Elongation factor 4 from Paenarthrobacter aurescens (strain TC1).